The following is a 515-amino-acid chain: Interferon alpha/beta receptor 2 (515 aa).

Residues 1–26 form the signal peptide; that stretch reads MLLSQNAFIFRSLNLVLMVYISLVFG. Residues 27-243 lie on the Extracellular side of the membrane; it reads ISYDSPDYTD…QESESAESAK (217 aa). 2 disulfides stabilise this stretch: Cys39–Cys122 and Cys85–Cys93. N-linked (GlcNAc...) asparagine glycosylation is found at Asn58, Asn87, Asn116, Asn188, and Asn192. A disulfide bridge links Cys207 with Cys227. A helical transmembrane segment spans residues 244–264; it reads IGGIITVFLIALVLTSTIVTL. The Cytoplasmic portion of the chain corresponds to 265–515; sequence KWIGYICLRN…VDLGDGYIMR (251 aa). Disordered stretches follow at residues 318–418 and 455–515; these read YDDE…EGSG and EMVD…YIMR. Residue Tyr337 is modified to Phosphotyrosine. The span at 362–375 shows a compositional bias: acidic residues; sequence PESEEEPDLPEVDV. At Ser400 the chain carries Phosphoserine. Residues 418-444 are mediates interaction with STAT2 (and required for the recruitment of USP18); the sequence is GGRITFNVDLNSVFLRVLDDEDSDDLE. Positions 464 to 488 are enriched in polar residues; sequence NVQSNHLLASGEGTQPTFPSPSSEG. At Ser467 the chain carries Phosphoserine. Phosphotyrosine is present on Tyr512.

The protein belongs to the type II cytokine receptor family. In terms of assembly, heterodimer with IFNAR1; forming the receptor for type I interferon. Interacts with JAK1. Interacts with the transcriptional factors STAT1 and STAT2. Interacts with USP18; indirectly via STAT2, it negatively regulates the assembly of the ternary interferon-IFNAR1-IFNAR2 complex and therefore type I interferon signaling. Post-translationally, phosphorylated on tyrosine residues upon interferon binding. Phosphorylation at Tyr-337 or Tyr-512 are sufficient to mediate interferon dependent activation of STAT1, STAT2 and STAT3 leading to antiproliferative effects on many different cell types. Glycosylated. Isoform 3 is detected in the urine (at protein level). Expressed in blood cells. Expressed in lymphoblastoid and fibrosarcoma cell lines.

The protein localises to the cell membrane. It is found in the secreted. Its function is as follows. Together with IFNAR1, forms the heterodimeric receptor for type I interferons (including interferons alpha, beta, epsilon, omega and kappa). Type I interferon binding activates the JAK-STAT signaling cascade, resulting in transcriptional activation or repression of interferon-regulated genes that encode the effectors of the interferon response. Mechanistically, type I interferon-binding brings the IFNAR1 and IFNAR2 subunits into close proximity with one another, driving their associated Janus kinases (JAKs) (TYK2 bound to IFNAR1 and JAK1 bound to IFNAR2) to cross-phosphorylate one another. The activated kinases phosphorylate specific tyrosine residues on the intracellular domains of IFNAR1 and IFNAR2, forming docking sites for the STAT transcription factors (STAT1, STAT2 and STAT). STAT proteins are then phosphorylated by the JAKs, promoting their translocation into the nucleus to regulate expression of interferon-regulated genes. Functionally, potent inhibitor of type I IFN receptor activity. The protein is Interferon alpha/beta receptor 2 (IFNAR2) of Homo sapiens (Human).